The following is a 255-amino-acid chain: Uracil-DNA glycosylase (255 aa).

The active-site Proton acceptor is aspartate 90.

The protein belongs to the uracil-DNA glycosylase (UDG) superfamily. UNG family.

The protein localises to the host nucleus. The catalysed reaction is Hydrolyzes single-stranded DNA or mismatched double-stranded DNA and polynucleotides, releasing free uracil.. Its function is as follows. Excises uracil residues from the DNA which can arise as a result of misincorporation of dUMP residues by DNA polymerase or deamination of cytosines. Therefore may reduce deleterious uracil incorporation into the viral genome, particularly in terminally differentiated cells which lack DNA repair enzymes. The polypeptide is Uracil-DNA glycosylase (Equine herpesvirus 2 (strain 86/87) (EHV-2)).